A 528-amino-acid chain; its full sequence is MASMISAEKRNPAIVILDFGSQYSELIARRIRETEVYSLVMSYTTSADKLRSLKPKGIILSGGPGSVYEEGAPYCDPEIFNLGIPVLGVCYGMQLMVHELGGSVKPATGKAEYGKAPLEVDDPTALLTNVISGSTMWMSHGDSVQKLPKGFVRLAHTSNTLEAAIALHDKSFYGVQFHPEVVHSTHGMVVIRNFVYDICSCEPDWTTNLFIDEAVSQVQQQVGDKKVLLALSGGVDSSTLAFLLNKAIGPQLTCMFIDQGFMRKGEPEFLMSFFDEKFKINVEYINARERFISQLKGVTDPEQKRKIIGREFIRVFEEESLRLGPFDYLAQGTLYPDVIESSGTNIDPKTGERIAVKIKSHHNVGGLPKDLQFKLVEPLRRLFKDEVRKVGKSLGLPDEIVRRHPFPGPGLAIRILGEVTHEKLNCLRDADLIVREEINNAGLYNKIWQAFAVLLPVYSVGVMGDQRTYAWPIVVRCVSSEDGMTADWSRLPYAVLEKISNRIVNEVEGVNRVVLDITSKPPGTIEWE.

In terms of domain architecture, Glutamine amidotransferase type-1 spans 13–204 (AIVILDFGSQ…VYDICSCEPD (192 aa)). The active-site Nucleophile is C90. Catalysis depends on residues H178 and E180. Positions 205 to 403 (WTTNLFIDEA…LGLPDEIVRR (199 aa)) constitute a GMPS ATP-PPase domain. 232 to 238 (SGGVDSS) contributes to the ATP binding site.

As to quaternary structure, homodimer.

It catalyses the reaction XMP + L-glutamine + ATP + H2O = GMP + L-glutamate + AMP + diphosphate + 2 H(+). It participates in purine metabolism; GMP biosynthesis; GMP from XMP (L-Gln route): step 1/1. In terms of biological role, catalyzes the synthesis of GMP from XMP. This is GMP synthase [glutamine-hydrolyzing] from Prochlorococcus marinus (strain NATL1A).